Consider the following 412-residue polypeptide: Maltoporin (412 aa).

The first 22 residues, 1–22 (MKKVSVIAAAVAATLAAGSAFA), serve as a signal peptide directing secretion.

This sequence belongs to the porin LamB (TC 1.B.3) family. As to quaternary structure, homotrimer formed of three 18-stranded antiparallel beta-barrels, containing three independent channels.

It localises to the cell outer membrane. It carries out the reaction beta-maltose(in) = beta-maltose(out). In terms of biological role, involved in the transport of maltose and maltodextrins. This Vibrio cholerae serotype O1 (strain ATCC 39315 / El Tor Inaba N16961) protein is Maltoporin.